A 284-amino-acid polypeptide reads, in one-letter code: 1D-myo-inositol 2-acetamido-2-deoxy-alpha-D-glucopyranoside deacetylase (284 aa).

3 residues coordinate Zn(2+): histidine 12, aspartate 15, and histidine 146.

Belongs to the MshB deacetylase family. It depends on Zn(2+) as a cofactor.

The enzyme catalyses 1D-myo-inositol 2-acetamido-2-deoxy-alpha-D-glucopyranoside + H2O = 1D-myo-inositol 2-amino-2-deoxy-alpha-D-glucopyranoside + acetate. In terms of biological role, catalyzes the deacetylation of 1D-myo-inositol 2-acetamido-2-deoxy-alpha-D-glucopyranoside (GlcNAc-Ins) in the mycothiol biosynthesis pathway. This chain is 1D-myo-inositol 2-acetamido-2-deoxy-alpha-D-glucopyranoside deacetylase, found in Mycolicibacterium gilvum (strain PYR-GCK) (Mycobacterium gilvum (strain PYR-GCK)).